A 576-amino-acid chain; its full sequence is Interleukin-1 receptor type 1 (576 aa).

Positions M1 to S19 are cleaved as a signal peptide. Ig-like C2-type domains are found at residues L20–S115, P121–T217, and P229–V331. At L20 to K338 the chain is on the extracellular side. 3 disulfides stabilise this stretch: C25-C107, C46-C99, and C145-C199. N-linked (GlcNAc...) asparagine glycosylation is found at N63 and N103. N236, N252, and N266 each carry an N-linked (GlcNAc...) asparagine glycan. The cysteines at positions 251 and 315 are disulfide-linked. The chain crosses the membrane as a helical span at residues N339 to Y359. Topologically, residues K360–G576 are cytoplasmic. Residues R386–M541 form the TIR domain. E473 is an active-site residue. A Phosphotyrosine modification is found at Y499. T556 is subject to Phosphothreonine; by PKC.

It belongs to the interleukin-1 receptor family. In terms of assembly, the interleukin-1 receptor complex is a heterodimer of IL1R1 and IL1RAP. Interacts with PIK3R1. Interacts with IL1A. In terms of processing, a soluble form (sIL1R1) is probably produced by proteolytic cleavage at the cell surface (shedding). Rapidly phosphorylated on Tyr-499 in response to IL-1, which creates a SH2 binding site for the PI 3-kinase regulatory subunit PIK3R1.

It localises to the membrane. It is found in the cell membrane. The protein resides in the secreted. The catalysed reaction is NAD(+) + H2O = ADP-D-ribose + nicotinamide + H(+). Receptor for IL1A, IL1B and IL1RN. After binding to interleukin-1 associates with the coreceptor IL1RAP to form the high affinity interleukin-1 receptor complex which mediates interleukin-1-dependent activation of NF-kappa-B, MAPK and other pathways. Signaling involves the recruitment of adapter molecules such as TOLLIP, MYD88, and IRAK1 or IRAK2 via the respective TIR domains of the receptor/coreceptor subunits. Binds ligands with comparable affinity and binding of antagonist IL1RN prevents association with IL1RAP to form a signaling complex. Involved in IL1B-mediated costimulation of IFNG production from T-helper 1 (Th1) cells. The chain is Interleukin-1 receptor type 1 (Il1r1) from Rattus norvegicus (Rat).